The chain runs to 151 residues: MQIILMEKVVNLGQLGDVVKVKNGYARNFLIPQGKAKRATQAAVAEFESKRAELEKTQADILAAAQARAAKLEGLMLQVTQKAGVDGKLFGSVTNADIEDALKAQGFEVERSMIRMPQGSLKQVGDHPVTIVLHTDVAAHIIVSVLGESVS.

The protein belongs to the bacterial ribosomal protein bL9 family.

Binds to the 23S rRNA. This Nitrosospira multiformis (strain ATCC 25196 / NCIMB 11849 / C 71) protein is Large ribosomal subunit protein bL9.